Reading from the N-terminus, the 654-residue chain is APC membrane recruitment protein 2 (654 aa).

Disordered stretches follow at residues 1-105, 224-289, 316-369, and 381-654; these read MEVQ…TAPL, ECGN…QSEQ, IIAD…PQVS, and PAHQ…QSRK. A compositionally biased stretch (pro residues) spans 9–18; sequence EPPPCDPQPP. The segment covering 60–70 has biased composition (basic and acidic residues); that stretch reads ELVRSKTHDGL. Positions 427 to 454 are enriched in basic and acidic residues; the sequence is PQKDEDSPAPRRAEPVLHHAPARLEKRP. Over residues 468–479 the composition is skewed to polar residues; sequence SGSSKTGKQQPS. A compositionally biased stretch (low complexity) spans 565–575; sequence SPKCSSSATSS. Residues 576–586 show a composition bias toward polar residues; that stretch reads FRSMKGSTSLP. The segment covering 601–621 has biased composition (low complexity); that stretch reads SHSSSQGALSSNLSPTSTTPP. The span at 644 to 654 shows a compositional bias: polar residues; it reads GKSTSTSQSRK.

Belongs to the Amer family.

It localises to the cell membrane. Negative regulator of the canonical Wnt signaling pathway involved in neuroectodermal patterning. Acts by specifically binding phosphatidylinositol 4,5-bisphosphate (PtdIns(4,5)P2), translocating to the cell membrane and interacting with key regulators of the canonical Wnt signaling pathway, such as components of the beta-catenin destruction complex. The protein is APC membrane recruitment protein 2 (amer2) of Danio rerio (Zebrafish).